The sequence spans 119 residues: Holo-[acyl-carrier-protein] synthase (119 aa).

Residues Asp8 and Glu60 each contribute to the Mg(2+) site.

It belongs to the P-Pant transferase superfamily. AcpS family. The cofactor is Mg(2+).

Its subcellular location is the cytoplasm. It carries out the reaction apo-[ACP] + CoA = holo-[ACP] + adenosine 3',5'-bisphosphate + H(+). Functionally, transfers the 4'-phosphopantetheine moiety from coenzyme A to a Ser of acyl-carrier-protein. In Staphylococcus haemolyticus (strain JCSC1435), this protein is Holo-[acyl-carrier-protein] synthase.